A 571-amino-acid polypeptide reads, in one-letter code: Dihydroxy-acid dehydratase (571 aa).

Residue C56 coordinates [2Fe-2S] cluster. D88 contributes to the Mg(2+) binding site. C129 is a binding site for [2Fe-2S] cluster. D130 and K131 together coordinate Mg(2+). At K131 the chain carries N6-carboxylysine. C201 serves as a coordination point for [2Fe-2S] cluster. Mg(2+) is bound at residue E452. The active-site Proton acceptor is the S478.

It belongs to the IlvD/Edd family. Homodimer. Requires [2Fe-2S] cluster as cofactor. Mg(2+) is required as a cofactor.

It catalyses the reaction (2R)-2,3-dihydroxy-3-methylbutanoate = 3-methyl-2-oxobutanoate + H2O. It carries out the reaction (2R,3R)-2,3-dihydroxy-3-methylpentanoate = (S)-3-methyl-2-oxopentanoate + H2O. It functions in the pathway amino-acid biosynthesis; L-isoleucine biosynthesis; L-isoleucine from 2-oxobutanoate: step 3/4. It participates in amino-acid biosynthesis; L-valine biosynthesis; L-valine from pyruvate: step 3/4. Functionally, functions in the biosynthesis of branched-chain amino acids. Catalyzes the dehydration of (2R,3R)-2,3-dihydroxy-3-methylpentanoate (2,3-dihydroxy-3-methylvalerate) into 2-oxo-3-methylpentanoate (2-oxo-3-methylvalerate) and of (2R)-2,3-dihydroxy-3-methylbutanoate (2,3-dihydroxyisovalerate) into 2-oxo-3-methylbutanoate (2-oxoisovalerate), the penultimate precursor to L-isoleucine and L-valine, respectively. The protein is Dihydroxy-acid dehydratase of Streptococcus mutans serotype c (strain ATCC 700610 / UA159).